Consider the following 310-residue polypeptide: Syndecan-1 (310 aa).

The N-terminal stretch at 1 to 22 (MRRAALWLWLCALALSLQPALP) is a signal peptide. Topologically, residues 23-254 (QIVATNLPPE…GLLDRKEVLG (232 aa)) are extracellular. Disordered regions lie at residues 27 to 100 (TNLP…EGPK) and 114 to 212 (LTAR…QDFT). The span at 32 to 42 (EDQDGSGDDSD) shows a compositional bias: acidic residues. O-linked (Xyl...) (chondroitin sulfate) serine glycosylation occurs at S37. An N-linked (GlcNAc...) asparagine glycan is attached at N43. S45 and S47 each carry an O-linked (Xyl...) (heparan sulfate) serine glycan. Over residues 55-75 (ITLSQQTPSTWKDTQLLTAIP) the composition is skewed to polar residues. Residues 117-127 (REQEATPRPRE) show a composition bias toward basic and acidic residues. Residues 128–151 (TTQLPTTHLASTTTATTAQEPATS) are compositionally biased toward low complexity. The segment covering 153 to 164 (PHRDMQPGHHET) has biased composition (basic and acidic residues). Residues S206 and S216 are each glycosylated (O-linked (Xyl...) (chondroitin sulfate) serine). Residues 255–275 (GVIAGGLVGLIFAVCLVGFML) form a helical membrane-spanning segment. Residues 276-310 (YRMKKKDEGSYSLEEPKQANGGAYQKPTKQEEFYA) are Cytoplasmic-facing. The interval 284–310 (GSYSLEEPKQANGGAYQKPTKQEEFYA) is disordered. Position 285 is a phosphoserine (S285).

Belongs to the syndecan proteoglycan family. In terms of assembly, interacts with CDCP1. Interacts (via C-terminus) with TIAM1 (via PDZ domain). Interacts with MDK. Post-translationally, shedding is enhanced by a number of factors such as heparanase, thrombin or EGF. Also by stress and wound healing. PMA-mediated shedding is inhibited by TIMP3. As to expression, detected in placenta (at protein level). Detected in fibroblasts (at protein level).

Its subcellular location is the membrane. It localises to the secreted. It is found in the extracellular exosome. Its function is as follows. Cell surface proteoglycan that contains both heparan sulfate and chondroitin sulfate and that links the cytoskeleton to the interstitial matrix. Regulates exosome biogenesis in concert with SDCBP and PDCD6IP. Able to induce its own expression in dental mesenchymal cells and also in the neighboring dental epithelial cells via an MSX1-mediated pathway. This chain is Syndecan-1, found in Homo sapiens (Human).